A 1042-amino-acid polypeptide reads, in one-letter code: Protein phosphatase Slingshot homolog 1 (1042 aa).

Residues 1–12 (MALVTLQRSPTP) are compositionally biased toward polar residues. Positions 1-29 (MALVTLQRSPTPSAASSSASNSELEAGSD) are disordered. At A2 the chain carries N-acetylalanine. A compositionally biased stretch (low complexity) spans 13 to 22 (SAASSSASNS). 2 positions are modified to phosphoserine: S37 and S57. One can recognise a DEK-C domain in the interval 249 to 304 (ERTERLIKAKLRSIMMSQDLENVTSKEIRNELEKQMNCNLKEFKEFIDNEMLLILG). The Tyrosine-protein phosphatase domain maps to 308–449 (KPSLIFDHLY…LSEYEGILDA (142 aa)). C393 functions as the Phosphocysteine intermediate in the catalytic mechanism. S516 carries the post-translational modification Phosphoserine. 4 disordered regions span residues 576-609 (FGNS…ASTQ), 668-766 (MERH…PHCD), 858-900 (IPEE…LDHT), and 915-942 (PTSS…KPGL). Over residues 675–693 (SSSAICTQPTFLPHVTSSP) the composition is skewed to polar residues. Positions 697 to 712 (ASSRSRAPERPASGPA) are enriched in low complexity. The span at 886-900 (LQKSPTSTLPRLDHT) shows a compositional bias: polar residues. Position 889 is a phosphoserine (S889). Residues 889–1042 (SPTSTLPRLD…LKSPSRVNKS (154 aa)) are interaction with YWHAG. The span at 917–935 (SSSISSNLTRSSSSDSIHS) shows a compositional bias: low complexity. S970 bears the Phosphoserine mark. Polar residues predominate over residues 985 to 995 (SSEADTSTIAD). Residues 985 to 1042 (SSEADTSTIADSQDAKCGLSSSFLPEPQSAPRDPAATSKSSGKSAPEHLKSPSRVNKS) form a disordered region.

The protein belongs to the protein-tyrosine phosphatase family. Interacts with the 14-3-3 proteins YWHAB, YWHAG, YWHAQ, and YWHAZ. Interaction with 14-3-3 proteins inhibits phosphatase activity and also blocks recruitment to lamellipodia and stimulation by actin. Interacts with actin and this stimulates phosphatase activity. Interacts with LIMK1. Post-translationally, phosphorylated. Inhibitory phosphorylation by PAK4 promotes binding to YWHAZ. Phosphorylation at Ser-970 is decreased by stimuli which promote actin reorganization and lamellipodia formation. Can be dephosphorylated and activated by PPP3CA/calcineurin A. Phosphorylation decreases immediately prior to telophase. As to expression, expressed in brain, heart, kidney and thymus. Also expressed at lower levels in liver, skeletal muscle, small intestine and spleen.

The protein resides in the cytoplasm. Its subcellular location is the cytoskeleton. It localises to the cleavage furrow. The protein localises to the midbody. It carries out the reaction O-phospho-L-tyrosyl-[protein] + H2O = L-tyrosyl-[protein] + phosphate. It catalyses the reaction O-phospho-L-seryl-[protein] + H2O = L-seryl-[protein] + phosphate. The enzyme catalyses O-phospho-L-threonyl-[protein] + H2O = L-threonyl-[protein] + phosphate. In terms of biological role, protein phosphatase which regulates actin filament dynamics. Dephosphorylates and activates the actin binding/depolymerizing factor cofilin, which subsequently binds to actin filaments and stimulates their disassembly. Inhibitory phosphorylation of cofilin is mediated by LIMK1, which may also be dephosphorylated and inactivated by this protein. In Mus musculus (Mouse), this protein is Protein phosphatase Slingshot homolog 1.